Consider the following 230-residue polypeptide: Cytochrome c oxidase subunit 2 (230 aa).

Residues 1–14 (MAYPLQLGFQDATS) lie on the Mitochondrial intermembrane side of the membrane. Residues 15-45 (PIMEELLHFHDHTLMIVFLISSLVLYIISTM) traverse the membrane as a helical segment. The Mitochondrial matrix segment spans residues 46–59 (LTTKLTHTNTMDAQ). The helical transmembrane segment at 60–87 (EVETIWTILPAIILILIALPSLRILYMM) threads the bilayer. The Mitochondrial intermembrane portion of the chain corresponds to 88–230 (DEINNPNLTI…NWTSSMMSTS (143 aa)). Cu cation-binding residues include H161, C196, E198, C200, H204, and M207. E198 serves as a coordination point for Mg(2+). Y218 bears the Phosphotyrosine mark.

Belongs to the cytochrome c oxidase subunit 2 family. In terms of assembly, component of the cytochrome c oxidase (complex IV, CIV), a multisubunit enzyme composed of 14 subunits. The complex is composed of a catalytic core of 3 subunits MT-CO1, MT-CO2 and MT-CO3, encoded in the mitochondrial DNA, and 11 supernumerary subunits COX4I, COX5A, COX5B, COX6A, COX6B, COX6C, COX7A, COX7B, COX7C, COX8 and NDUFA4, which are encoded in the nuclear genome. The complex exists as a monomer or a dimer and forms supercomplexes (SCs) in the inner mitochondrial membrane with NADH-ubiquinone oxidoreductase (complex I, CI) and ubiquinol-cytochrome c oxidoreductase (cytochrome b-c1 complex, complex III, CIII), resulting in different assemblies (supercomplex SCI(1)III(2)IV(1) and megacomplex MCI(2)III(2)IV(2)). Found in a complex with TMEM177, COA6, COX18, COX20, SCO1 and SCO2. Interacts with TMEM177 in a COX20-dependent manner. Interacts with COX20. Interacts with COX16. The cofactor is Cu cation.

Its subcellular location is the mitochondrion inner membrane. The catalysed reaction is 4 Fe(II)-[cytochrome c] + O2 + 8 H(+)(in) = 4 Fe(III)-[cytochrome c] + 2 H2O + 4 H(+)(out). Its function is as follows. Component of the cytochrome c oxidase, the last enzyme in the mitochondrial electron transport chain which drives oxidative phosphorylation. The respiratory chain contains 3 multisubunit complexes succinate dehydrogenase (complex II, CII), ubiquinol-cytochrome c oxidoreductase (cytochrome b-c1 complex, complex III, CIII) and cytochrome c oxidase (complex IV, CIV), that cooperate to transfer electrons derived from NADH and succinate to molecular oxygen, creating an electrochemical gradient over the inner membrane that drives transmembrane transport and the ATP synthase. Cytochrome c oxidase is the component of the respiratory chain that catalyzes the reduction of oxygen to water. Electrons originating from reduced cytochrome c in the intermembrane space (IMS) are transferred via the dinuclear copper A center (CU(A)) of subunit 2 and heme A of subunit 1 to the active site in subunit 1, a binuclear center (BNC) formed by heme A3 and copper B (CU(B)). The BNC reduces molecular oxygen to 2 water molecules using 4 electrons from cytochrome c in the IMS and 4 protons from the mitochondrial matrix. The sequence is that of Cytochrome c oxidase subunit 2 (MT-CO2) from Ornithorhynchus anatinus (Duckbill platypus).